The following is a 114-amino-acid chain: MGSPPCALGLFCCCSSCFCLCCPRHRPVSRLAAVVGGAAAVPAVVSGVTGLILSPSQSPIFIQPTPLPQTLPLRPGLDLAFANQPGHLAPLGEIRPSAPPLPPVADLPQPGLRR.

Hydrophobic regions lie at residues C6 to C22 and A33 to L53. Residues V28–P68 are interaction with host HPX. Residues P72 to R114 are homodimerization, and interaction with host AMBP/bikunin. The tract at residues L91–R114 is disordered. The interval R95–V104 is interaction with host SRC, HCK, FYN, PIK3R3 and GRB2. Positions P96 to P99 match the PTAP/PSAP motif motif.

The protein belongs to the hepevirus ORF3 protein family. In terms of assembly, forms homooligomers. Interacts with host SRC, HCK, FYN, PIK3R3 and GRB2 (via SH3 domain); binding does not activate the kinases. Interacts with host AMBP/bikunin and AMBP/alpha-1-microglobulin peptides. Interacts with host HPX/hemopexin. Interacts (when phosphorylated) with capsid protein ORF2. Interacts with host TSG101; this interaction plays a role in viral release from the host cell. Interacts with host SIRPA; this interaction down-regulates the phosphorylation of host IRF3. In terms of processing, palmitoylated in the N-terminus.

Its subcellular location is the host endoplasmic reticulum membrane. It is found in the host cytoplasm. The protein localises to the host cytoskeleton. It localises to the virion. The protein resides in the host cell membrane. Its function is as follows. Small multifunctional phosphoprotein involved in virion morphogenesis, egress and counteracting host innate immunity. Plays critical roles in the final steps of viral release by interacting with host TSG101, a member of the vacuolar protein-sorting pathway and using other cellular host proteins involved in vesicle formation pathway. Also acts as a viroporin and forms ion conductive pores allowing viral particle release. Impairs the generation of type I interferon by down-regulating host TLR3 and TLR7 as well as their downstream signaling pathways. Down-regulates the phosphorylation of host IRF3 via the interaction with host SIRP-alpha, thereby inhibiting IFN-I expression. Interacts with host microtubules. The protein is Protein ORF3 of Hepatitis E virus genotype 2 (isolate Human/Mexico) (HEV-2).